A 295-amino-acid polypeptide reads, in one-letter code: Protoheme IX farnesyltransferase (295 aa).

9 helical membrane-spanning segments follow: residues 27–47, 48–68, 93–115, 119–136, 147–167, 175–195, 219–239, 247–267, and 275–295; these read IMYLVVLTGITGMIIAPGNIH, PFIGIISTLCIALGSGAAGAI, IARSTAIELGLVLSVISVTVMMI, YLSGILLAISIGFYSLVY, NIVIGGIAGALPPIIGWTSVT, LILFLIIFVWTPPHFWALSLL, IYILVYSIILFIITLLPGIFL, TCAIPLGMTFVFHAFKVFVSI, and MFTYSIAYLFILFICIIISSF.

It belongs to the UbiA prenyltransferase family. Protoheme IX farnesyltransferase subfamily.

The protein localises to the cell inner membrane. The enzyme catalyses heme b + (2E,6E)-farnesyl diphosphate + H2O = Fe(II)-heme o + diphosphate. It participates in porphyrin-containing compound metabolism; heme O biosynthesis; heme O from protoheme: step 1/1. Its function is as follows. Converts heme B (protoheme IX) to heme O by substitution of the vinyl group on carbon 2 of heme B porphyrin ring with a hydroxyethyl farnesyl side group. The sequence is that of Protoheme IX farnesyltransferase from Ehrlichia chaffeensis (strain ATCC CRL-10679 / Arkansas).